We begin with the raw amino-acid sequence, 227 residues long: Octanoyltransferase (227 aa).

In terms of domain architecture, BPL/LPL catalytic spans 34 to 212 (RQREDGLMLL…AFAEVFPVTW (179 aa)). Substrate is bound by residues 76 to 83 (RGGEVTYH), 143 to 145 (AIA), and 156 to 158 (GFA). Residue Cys-174 is the Acyl-thioester intermediate of the active site.

Belongs to the LipB family.

Its subcellular location is the cytoplasm. The enzyme catalyses octanoyl-[ACP] + L-lysyl-[protein] = N(6)-octanoyl-L-lysyl-[protein] + holo-[ACP] + H(+). It participates in protein modification; protein lipoylation via endogenous pathway; protein N(6)-(lipoyl)lysine from octanoyl-[acyl-carrier-protein]: step 1/2. In terms of biological role, catalyzes the transfer of endogenously produced octanoic acid from octanoyl-acyl-carrier-protein onto the lipoyl domains of lipoate-dependent enzymes. Lipoyl-ACP can also act as a substrate although octanoyl-ACP is likely to be the physiological substrate. In Synechocystis sp. (strain ATCC 27184 / PCC 6803 / Kazusa), this protein is Octanoyltransferase.